A 349-amino-acid chain; its full sequence is Small ribosomal subunit protein uS2 (349 aa).

This sequence belongs to the universal ribosomal protein uS2 family.

This chain is Small ribosomal subunit protein uS2, found in Methylocella silvestris (strain DSM 15510 / CIP 108128 / LMG 27833 / NCIMB 13906 / BL2).